A 250-amino-acid polypeptide reads, in one-letter code: Putative inner dynein arm light chain, axonemal (250 aa).

The stretch at M168 to K250 forms a coiled coil.

It belongs to the inner dynein arm light chain family.

Its subcellular location is the cell projection. It is found in the cilium. The protein resides in the dynein axonemal particle. Its function is as follows. May play a dynamic role in flagellar motility. The chain is Putative inner dynein arm light chain, axonemal from Drosophila melanogaster (Fruit fly).